Consider the following 230-residue polypeptide: Demethylmenaquinone methyltransferase (230 aa).

S-adenosyl-L-methionine contacts are provided by residues Thr62, Asp80, 100-101 (DG), and Ser117.

It belongs to the class I-like SAM-binding methyltransferase superfamily. MenG/UbiE family.

It carries out the reaction a 2-demethylmenaquinol + S-adenosyl-L-methionine = a menaquinol + S-adenosyl-L-homocysteine + H(+). The protein operates within quinol/quinone metabolism; menaquinone biosynthesis; menaquinol from 1,4-dihydroxy-2-naphthoate: step 2/2. Functionally, methyltransferase required for the conversion of demethylmenaquinol (DMKH2) to menaquinol (MKH2). This Corynebacterium efficiens (strain DSM 44549 / YS-314 / AJ 12310 / JCM 11189 / NBRC 100395) protein is Demethylmenaquinone methyltransferase.